The following is a 317-amino-acid chain: Apolipoprotein E (317 aa).

A signal peptide spans 1–18; sequence MKVLWAALLVTFLAGCQA. 8 consecutive repeat copies span residues 80–101, 102–123, 124–145, 146–167, 168–189, 190–211, 212–233, and 234–255. The 8 X 22 AA approximate tandem repeats stretch occupies residues 80–255; it reads TLMDETMKEL…RLDEVKEQVA (176 aa). Met143 is subject to Methionine sulfoxide. Residue Ser147 is modified to Phosphoserine. Positions 158–168 are LDL and other lipoprotein receptors binding; sequence HLRKLRKRLLR. 162-165 serves as a coordination point for heparin; sequence LRKR. The tract at residues 210 to 290 is lipid-binding and lipoprotein association; that stretch reads AATVGSLASQ…SWFEPLVEDM (81 aa). O-linked (GalNAc...) threonine glycosylation is present at Thr212. 229-236 lines the heparin pocket; it reads GERLRARM. The interval 266–317 is homooligomerization; the sequence is QQISLQAEAFQARLKSWFEPLVEDMQRQWAGLVEKVQAAVGASTAPVPSDNH. The interval 278–290 is specificity for association with VLDL; the sequence is RLKSWFEPLVEDM.

It belongs to the apolipoprotein A1/A4/E family. Homotetramer. May interact with ABCA1; functionally associated with ABCA1 in the biogenesis of HDLs. May interact with APP/A4 amyloid-beta peptide; the interaction is extremely stable in vitro but its physiological significance is unclear. May interact with MAPT. May interact with MAP2. In the cerebrospinal fluid, interacts with secreted SORL1. Interacts with PMEL; this allows the loading of PMEL luminal fragment on ILVs to induce fibril nucleation. APOE exists as multiple glycosylated and sialylated glycoforms within cells and in plasma. The extent of glycosylation and sialylation are tissue and context specific. Post-translationally, glycated in plasma VLDL. In terms of processing, phosphorylated by FAM20C in the extracellular medium.

Its subcellular location is the secreted. It is found in the extracellular space. The protein resides in the extracellular matrix. It localises to the extracellular vesicle. The protein localises to the endosome. Its subcellular location is the multivesicular body. APOE is an apolipoprotein, a protein associating with lipid particles, that mainly functions in lipoprotein-mediated lipid transport between organs via the plasma and interstitial fluids. APOE is a core component of plasma lipoproteins and is involved in their production, conversion and clearance. Apolipoproteins are amphipathic molecules that interact both with lipids of the lipoprotein particle core and the aqueous environment of the plasma. As such, APOE associates with chylomicrons, chylomicron remnants, very low density lipoproteins (VLDL) and intermediate density lipoproteins (IDL) but shows a preferential binding to high-density lipoproteins (HDL). It also binds a wide range of cellular receptors including the LDL receptor/LDLR, the LDL receptor-related proteins LRP1, LRP2 and LRP8 and the very low-density lipoprotein receptor/VLDLR that mediate the cellular uptake of the APOE-containing lipoprotein particles. Finally, APOE also has a heparin-binding activity and binds heparan-sulfate proteoglycans on the surface of cells, a property that supports the capture and the receptor-mediated uptake of APOE-containing lipoproteins by cells. A main function of APOE is to mediate lipoprotein clearance through the uptake of chylomicrons, VLDLs, and HDLs by hepatocytes. APOE is also involved in the biosynthesis by the liver of VLDLs as well as their uptake by peripheral tissues ensuring the delivery of triglycerides and energy storage in muscle, heart and adipose tissues. By participating in the lipoprotein-mediated distribution of lipids among tissues, APOE plays a critical role in plasma and tissues lipid homeostasis. APOE is also involved in two steps of reverse cholesterol transport, the HDLs-mediated transport of cholesterol from peripheral tissues to the liver, and thereby plays an important role in cholesterol homeostasis. First, it is functionally associated with ABCA1 in the biogenesis of HDLs in tissues. Second, it is enriched in circulating HDLs and mediates their uptake by hepatocytes. APOE also plays an important role in lipid transport in the central nervous system, regulating neuron survival and sprouting. The chain is Apolipoprotein E (APOE) from Macaca nemestrina (Pig-tailed macaque).